The following is a 157-amino-acid chain: Glutaredoxin-2, mitochondrial (157 aa).

The transit peptide at 1 to 18 (MYWRRAALVGTRLIPVRS) directs the protein to the mitochondrion. The residue at position 20 (serine 20) is a Phosphoserine. One can recognise a Glutaredoxin domain in the interval 51-151 (VNQIQETISN…PLVHQCHLKN (101 aa)). Cysteine 62 contacts [2Fe-2S] cluster. Lysine 68 is a binding site for glutathione. Residue cysteine 71 is modified to S-glutathionyl cysteine; alternate. Cysteine 71 and cysteine 74 form a disulfide bridge. Residues glutamine 103 and valine 115 each contribute to the glutathione site. Cysteine 147 is a [2Fe-2S] cluster binding site.

This sequence belongs to the glutaredoxin family. Monomer; active form. Homodimer; inactive form. The homodimer is probably linked by 1 2Fe-2S cluster.

The protein resides in the mitochondrion. Its activity is regulated as follows. The 2Fe-2S present in the homodimer leads to inactivation of the enzyme. The 2Fe-2S may serve as a redox sensor: the presence of one-electron oxidants or reductants leading to the loss of the 2Fe-2S cluster, subsequent monomerization and activation of the enzyme. Functionally, glutathione-dependent oxidoreductase that facilitates the maintenance of mitochondrial redox homeostasis upon induction of apoptosis by oxidative stress. Involved in response to hydrogen peroxide and regulation of apoptosis caused by oxidative stress. Acts as a very efficient catalyst of monothiol reactions because of its high affinity for protein glutathione-mixed disulfides. Can receive electrons not only from glutathione (GSH), but also from thioredoxin reductase supporting both monothiol and dithiol reactions. Efficiently catalyzes both glutathionylation and deglutathionylation of mitochondrial complex I, which in turn regulates the superoxide production by the complex. Overexpression decreases the susceptibility to apoptosis and prevents loss of cardiolipin and cytochrome c release. In Bos taurus (Bovine), this protein is Glutaredoxin-2, mitochondrial (GLRX2).